We begin with the raw amino-acid sequence, 291 residues long: Transcription factor TYE7 (291 aa).

Residues 89 to 109 (FPTDQFFSNPSSYSHSPEVSS) form a disordered region. Positions 96–109 (SNPSSYSHSPEVSS) are enriched in low complexity. Position 104 is a phosphoserine (S104). Positions 180–265 (FQKQAHNKIE…EKAVDYILYL (86 aa)) constitute a bHLH domain. Positions 185, 189, and 193 each coordinate DNA. Residues 221 to 245 (DSVKKQDEDGAETAATTPLPSAAAT) form a disordered region. Positions 233 to 245 (TAATTPLPSAAAT) are enriched in low complexity. The residue at position 237 (T237) is a Phosphothreonine.

Homodimer. Efficient DNA binding requires dimerization with another bHLH protein.

Its subcellular location is the nucleus. Its function is as follows. Transcriptional activator of glycolytic gene expression, such as enolase genes (ENO1 and ENO2), glyceraldehyde-3-phosphate dehydrogenase gene (TDH), phosphoglycerate kinase (PGK1), phosphoglycerate mutase (PGM1), pyruvate kinase (PYK1) and triosephosphate isomerase (TPI1) genes. Binds DNA on E-box motifs: 5'-CANNTG-3'. In response to adenylic nucleotide reduction, activates Ty1 mRNA transcription, possibly by controlling Ty1 antisense transcription. Acts as a cell cycle transcription factor. Its function may also be linked to sulfur metabolism and the cross-regulation between phosphate and sulfate metabolism. This is Transcription factor TYE7 from Saccharomyces cerevisiae (strain ATCC 204508 / S288c) (Baker's yeast).